A 263-amino-acid chain; its full sequence is Type III pantothenate kinase (263 aa).

14–21 contributes to the ATP binding site; sequence DIGNTSVN. 115–118 contacts substrate; sequence GADR. Asp-117 (proton acceptor) is an active-site residue. Asp-137 is a K(+) binding site. Residue Thr-140 coordinates ATP. Thr-192 contacts substrate.

Belongs to the type III pantothenate kinase family. As to quaternary structure, homodimer. NH4(+) is required as a cofactor. The cofactor is K(+).

It localises to the cytoplasm. The catalysed reaction is (R)-pantothenate + ATP = (R)-4'-phosphopantothenate + ADP + H(+). It functions in the pathway cofactor biosynthesis; coenzyme A biosynthesis; CoA from (R)-pantothenate: step 1/5. Its function is as follows. Catalyzes the phosphorylation of pantothenate (Pan), the first step in CoA biosynthesis. The chain is Type III pantothenate kinase from Dehalococcoides mccartyi (strain ATCC BAA-2100 / JCM 16839 / KCTC 5957 / BAV1).